A 423-amino-acid polypeptide reads, in one-letter code: Histidine--tRNA ligase (423 aa).

Belongs to the class-II aminoacyl-tRNA synthetase family. Homodimer.

The protein localises to the cytoplasm. The catalysed reaction is tRNA(His) + L-histidine + ATP = L-histidyl-tRNA(His) + AMP + diphosphate + H(+). The protein is Histidine--tRNA ligase (hisS) of Pasteurella multocida (strain Pm70).